A 215-amino-acid polypeptide reads, in one-letter code: Cytochrome b6 (215 aa).

A helical transmembrane segment spans residues Ile32 to Phe52. Cys35 provides a ligand contact to heme c. Heme b-binding residues include His86 and His100. 3 consecutive transmembrane segments (helical) span residues Ala90–Phe110, Leu116–Tyr136, and Leu186–Ile206. His187 and His202 together coordinate heme b.

It belongs to the cytochrome b family. PetB subfamily. The 4 large subunits of the cytochrome b6-f complex are cytochrome b6, subunit IV (17 kDa polypeptide, PetD), cytochrome f and the Rieske protein, while the 4 small subunits are PetG, PetL, PetM and PetN. The complex functions as a dimer. The cofactor is heme b. It depends on heme c as a cofactor.

Its subcellular location is the plastid. It localises to the chloroplast thylakoid membrane. In terms of biological role, component of the cytochrome b6-f complex, which mediates electron transfer between photosystem II (PSII) and photosystem I (PSI), cyclic electron flow around PSI, and state transitions. This is Cytochrome b6 from Nephroselmis olivacea (Green alga).